Consider the following 403-residue polypeptide: 26S proteasome regulatory subunit 8 homolog (403 aa).

186-193 (GPPGTGKT) contacts ATP.

The protein belongs to the AAA ATPase family.

The protein resides in the cytoplasm. It localises to the nucleus. Functionally, the 26S proteasome is involved in the ATP-dependent degradation of ubiquitinated proteins. The regulatory (or ATPase) complex confers ATP dependency and substrate specificity to the 26S complex. The protein is 26S proteasome regulatory subunit 8 homolog (let1) of Schizosaccharomyces pombe (strain 972 / ATCC 24843) (Fission yeast).